We begin with the raw amino-acid sequence, 209 residues long: Small ribosomal subunit protein uS5 (209 aa).

Positions 1–11 (MTQPNTQTTPN) are enriched in polar residues. Residues 1 to 55 (MTQPNTQTTPNDVPAAAEGQQEQQQQQRRGGGRERRGGGRRGDRRGQERDSEWQE) form a disordered region. Low complexity predominate over residues 18–28 (EGQQEQQQQQR). Over residues 31-55 (GGRERRGGGRRGDRRGQERDSEWQE) the composition is skewed to basic and acidic residues. The S5 DRBM domain maps to 53 to 116 (WQERVVQIRR…ADGKKHLVKV (64 aa)).

It belongs to the universal ribosomal protein uS5 family. Part of the 30S ribosomal subunit. Contacts proteins S4 and S8.

In terms of biological role, with S4 and S12 plays an important role in translational accuracy. Functionally, located at the back of the 30S subunit body where it stabilizes the conformation of the head with respect to the body. This Prochlorococcus marinus (strain MIT 9313) protein is Small ribosomal subunit protein uS5.